Reading from the N-terminus, the 371-residue chain is Glutamate 5-kinase (371 aa).

Lysine 10 contributes to the ATP binding site. Residues serine 50, aspartate 137, and asparagine 149 each contribute to the substrate site. ATP is bound by residues 169-170 (SD) and 208-214 (TGGMYTK). The region spanning 274-352 (QGKVYIDDGA…EEIKNILGED (79 aa)) is the PUA domain.

It belongs to the glutamate 5-kinase family.

It is found in the cytoplasm. The catalysed reaction is L-glutamate + ATP = L-glutamyl 5-phosphate + ADP. Its pathway is amino-acid biosynthesis; L-proline biosynthesis; L-glutamate 5-semialdehyde from L-glutamate: step 1/2. Functionally, catalyzes the transfer of a phosphate group to glutamate to form L-glutamate 5-phosphate. The chain is Glutamate 5-kinase from Dictyoglomus thermophilum (strain ATCC 35947 / DSM 3960 / H-6-12).